The primary structure comprises 574 residues: Proline--tRNA ligase (574 aa).

This sequence belongs to the class-II aminoacyl-tRNA synthetase family. ProS type 1 subfamily. In terms of assembly, homodimer.

The protein localises to the cytoplasm. The catalysed reaction is tRNA(Pro) + L-proline + ATP = L-prolyl-tRNA(Pro) + AMP + diphosphate. Catalyzes the attachment of proline to tRNA(Pro) in a two-step reaction: proline is first activated by ATP to form Pro-AMP and then transferred to the acceptor end of tRNA(Pro). As ProRS can inadvertently accommodate and process non-cognate amino acids such as alanine and cysteine, to avoid such errors it has two additional distinct editing activities against alanine. One activity is designated as 'pretransfer' editing and involves the tRNA(Pro)-independent hydrolysis of activated Ala-AMP. The other activity is designated 'posttransfer' editing and involves deacylation of mischarged Ala-tRNA(Pro). The misacylated Cys-tRNA(Pro) is not edited by ProRS. This Fervidobacterium nodosum (strain ATCC 35602 / DSM 5306 / Rt17-B1) protein is Proline--tRNA ligase.